The following is a 454-amino-acid chain: Phosphoglucosamine mutase (454 aa).

S101 acts as the Phosphoserine intermediate in catalysis. Mg(2+) contacts are provided by S101, D243, D245, and D247. S101 carries the post-translational modification Phosphoserine.

Belongs to the phosphohexose mutase family. Requires Mg(2+) as cofactor. In terms of processing, activated by phosphorylation.

It catalyses the reaction alpha-D-glucosamine 1-phosphate = D-glucosamine 6-phosphate. Functionally, catalyzes the conversion of glucosamine-6-phosphate to glucosamine-1-phosphate. The protein is Phosphoglucosamine mutase of Geotalea uraniireducens (strain Rf4) (Geobacter uraniireducens).